The chain runs to 80 residues: Defensin coprisin (80 aa).

Positions 1-20 (MAKLIAFALVASLCLSMVLC) are cleaved as a signal peptide. A propeptide spanning residues 21 to 37 (NPLPEEVQEEGLVRQKR) is cleaved from the precursor. Cystine bridges form between C40–C71, C57–C76, and C61–C78.

It belongs to the invertebrate defensin family. Type 1 subfamily.

It is found in the secreted. It localises to the target cell membrane. In terms of biological role, potent broad-spectrum antibacterial peptide against both Gram-positive (B.subtilis, S.epidermidis, and S.aureus) and Gram-negative bacteria (E.coli, S.typhimurium, and P.aeruginosa). Is also active against all antibiotic-resistant bacterial strains tested. Induces apoptosis in C.albicans, but does not disrupt the fungal plasma membrane at all. Acts by permeabilizing the bacterial cell membrane, but not human membranes. Also shows potent anti-inflammatory activities, since it reduces both LPS-induced nitric oxide release and pro-inflammatory cytokine production. Anti-inflammatory activities are initiated by suppressing the binding of LPS to toll-like receptor 4 (TLR4), and subsequently inhibiting the phosphorylation of p38 mitogen-activated protein kinase (MAPK) and nuclear translocation of NF-kB (TNFRSF11A). Does not show hemolytic activity against human erythrocytes. In Copris tripartitus (Dung beetle), this protein is Defensin coprisin.